Consider the following 267-residue polypeptide: 4-hydroxy-tetrahydrodipicolinate reductase (267 aa).

Residues 12 to 17 (GPRGRM), 100 to 102 (GTT), and 126 to 129 (APNF) contribute to the NAD(+) site. The active-site Proton donor/acceptor is the H156. Position 157 (H157) interacts with (S)-2,3,4,5-tetrahydrodipicolinate. The active-site Proton donor is the K160. 166–167 (GT) is a binding site for (S)-2,3,4,5-tetrahydrodipicolinate.

The protein belongs to the DapB family.

It localises to the cytoplasm. It catalyses the reaction (S)-2,3,4,5-tetrahydrodipicolinate + NAD(+) + H2O = (2S,4S)-4-hydroxy-2,3,4,5-tetrahydrodipicolinate + NADH + H(+). The catalysed reaction is (S)-2,3,4,5-tetrahydrodipicolinate + NADP(+) + H2O = (2S,4S)-4-hydroxy-2,3,4,5-tetrahydrodipicolinate + NADPH + H(+). It participates in amino-acid biosynthesis; L-lysine biosynthesis via DAP pathway; (S)-tetrahydrodipicolinate from L-aspartate: step 4/4. In terms of biological role, catalyzes the conversion of 4-hydroxy-tetrahydrodipicolinate (HTPA) to tetrahydrodipicolinate. This chain is 4-hydroxy-tetrahydrodipicolinate reductase, found in Bacillus subtilis (strain 168).